Consider the following 197-residue polypeptide: Putative RING-H2 finger protein ATL71 (197 aa).

Residues 20 to 40 (MGGLAYGIGVSIGILMLITTI) traverse the membrane as a helical segment. A disordered region spans residues 53-80 (SASPTTTPRTRRRQRESNGTLPPGQERF). An RING-type; atypical zinc finger spans residues 129 to 171 (CSICLADYKKMDMIRVLPDCNHLFHDNCVDPWLRLHPTCPVCR).

This sequence belongs to the RING-type zinc finger family. ATL subfamily.

It is found in the membrane. It carries out the reaction S-ubiquitinyl-[E2 ubiquitin-conjugating enzyme]-L-cysteine + [acceptor protein]-L-lysine = [E2 ubiquitin-conjugating enzyme]-L-cysteine + N(6)-ubiquitinyl-[acceptor protein]-L-lysine.. It participates in protein modification; protein ubiquitination. This chain is Putative RING-H2 finger protein ATL71 (ATL71), found in Arabidopsis thaliana (Mouse-ear cress).